Reading from the N-terminus, the 284-residue chain is 4-diphosphocytidyl-2-C-methyl-D-erythritol kinase (284 aa).

The active site involves lysine 14. Residue 98-108 (PMGGGLGGGSS) participates in ATP binding. Aspartate 140 is an active-site residue.

It belongs to the GHMP kinase family. IspE subfamily.

The catalysed reaction is 4-CDP-2-C-methyl-D-erythritol + ATP = 4-CDP-2-C-methyl-D-erythritol 2-phosphate + ADP + H(+). It participates in isoprenoid biosynthesis; isopentenyl diphosphate biosynthesis via DXP pathway; isopentenyl diphosphate from 1-deoxy-D-xylulose 5-phosphate: step 3/6. Functionally, catalyzes the phosphorylation of the position 2 hydroxy group of 4-diphosphocytidyl-2C-methyl-D-erythritol. The chain is 4-diphosphocytidyl-2-C-methyl-D-erythritol kinase from Shewanella sp. (strain ANA-3).